A 375-amino-acid polypeptide reads, in one-letter code: Anhydro-N-acetylmuramic acid kinase (375 aa).

12-19 (GTSLDGVD) lines the ATP pocket.

Belongs to the anhydro-N-acetylmuramic acid kinase family.

It catalyses the reaction 1,6-anhydro-N-acetyl-beta-muramate + ATP + H2O = N-acetyl-D-muramate 6-phosphate + ADP + H(+). The protein operates within amino-sugar metabolism; 1,6-anhydro-N-acetylmuramate degradation. It functions in the pathway cell wall biogenesis; peptidoglycan recycling. Functionally, catalyzes the specific phosphorylation of 1,6-anhydro-N-acetylmuramic acid (anhMurNAc) with the simultaneous cleavage of the 1,6-anhydro ring, generating MurNAc-6-P. Is required for the utilization of anhMurNAc either imported from the medium or derived from its own cell wall murein, and thus plays a role in cell wall recycling. This chain is Anhydro-N-acetylmuramic acid kinase, found in Variovorax paradoxus (strain S110).